A 722-amino-acid polypeptide reads, in one-letter code: Endoglucanase F (722 aa).

The signal sequence occupies residues 1–29 (MSKNFKRVGAVAVAAAMSLSIMATTSINA). The interval 142-165 (PEFQDPSKYPSPLDTSQPVGRDPI) is disordered. The segment covering 154 to 165 (LDTSQPVGRDPI) has biased composition (polar residues). The Dockerin domain maps to 661 to 722 (PEKLLGDVNG…LLKKALLSIQ (62 aa)).

The protein belongs to the glycosyl hydrolase 48 (cellulase L) family.

The catalysed reaction is Endohydrolysis of (1-&gt;4)-beta-D-glucosidic linkages in cellulose, lichenin and cereal beta-D-glucans.. In terms of biological role, probable endoglucanase involved in the degradation of cellulose or related beta-glucans. The chain is Endoglucanase F (celCCF) from Ruminiclostridium cellulolyticum (strain ATCC 35319 / DSM 5812 / JCM 6584 / H10) (Clostridium cellulolyticum).